The chain runs to 226 residues: Movement and silencing protein TGBp1 (226 aa).

In terms of domain architecture, (+)RNA virus helicase ATP-binding spans 1 to 115 (MDILIISLKS…EFSLEPHFYL (115 aa)). The (+)RNA virus helicase C-terminal domain maps to 116–226 (ETSFRVPRKV…KGLTYVRAGT (111 aa)).

It belongs to the Tymovirales TGBp1 protein family. As to quaternary structure, homodimer and homooligomer. Interacts with capsid protein. Interacts with host AGO1; this interaction targets the host protein for degradation, thereby suppressing the antiviral RNA silencing.

The protein localises to the host cytoplasm. In terms of biological role, transports viral genome to neighboring plant cells directly through plasmosdesmata, without any budding. The movement protein allows efficient cell to cell propagation, by bypassing the host cell wall barrier. Increases plasmodesma size exclusion limit. Acts as a suppressor of RNA-mediated gene silencing, also known as post-transcriptional gene silencing (PTGS), a mechanism of plant viral defense that limits the accumulation of viral RNAs. In Brassica campestris (Field mustard), this protein is Movement and silencing protein TGBp1.